The following is a 69-amino-acid chain: Small, acid-soluble spore protein I (69 aa).

This sequence belongs to the SspI family.

It is found in the spore core. The chain is Small, acid-soluble spore protein I from Bacillus mycoides (strain KBAB4) (Bacillus weihenstephanensis).